The following is a 356-amino-acid chain: NADH-quinone oxidoreductase subunit H (356 aa).

8 consecutive transmembrane segments (helical) span residues 18–38 (IVMV…IAYI), 87–107 (GVFL…WAVI), 120–140 (VGIL…IMGG), 166–186 (IGFV…SAIV), 202–222 (WLTF…VFYV), 257–277 (LFML…AILF), 292–312 (WVPG…LIAM), and 333–353 (FLPL…FAGI).

It belongs to the complex I subunit 1 family. NDH-1 is composed of 14 different subunits. Subunits NuoA, H, J, K, L, M, N constitute the membrane sector of the complex.

Its subcellular location is the cell inner membrane. It carries out the reaction a quinone + NADH + 5 H(+)(in) = a quinol + NAD(+) + 4 H(+)(out). Functionally, NDH-1 shuttles electrons from NADH, via FMN and iron-sulfur (Fe-S) centers, to quinones in the respiratory chain. The immediate electron acceptor for the enzyme in this species is believed to be ubiquinone. Couples the redox reaction to proton translocation (for every two electrons transferred, four hydrogen ions are translocated across the cytoplasmic membrane), and thus conserves the redox energy in a proton gradient. This subunit may bind ubiquinone. The sequence is that of NADH-quinone oxidoreductase subunit H from Nitrobacter winogradskyi (strain ATCC 25391 / DSM 10237 / CIP 104748 / NCIMB 11846 / Nb-255).